Reading from the N-terminus, the 357-residue chain is Histidinol-phosphate aminotransferase (357 aa).

Lys-221 is modified (N6-(pyridoxal phosphate)lysine).

This sequence belongs to the class-II pyridoxal-phosphate-dependent aminotransferase family. Histidinol-phosphate aminotransferase subfamily. Requires pyridoxal 5'-phosphate as cofactor.

It carries out the reaction L-histidinol phosphate + 2-oxoglutarate = 3-(imidazol-4-yl)-2-oxopropyl phosphate + L-glutamate. Its pathway is amino-acid biosynthesis; L-histidine biosynthesis; L-histidine from 5-phospho-alpha-D-ribose 1-diphosphate: step 7/9. The sequence is that of Histidinol-phosphate aminotransferase (hisC) from Sulfurisphaera tokodaii (strain DSM 16993 / JCM 10545 / NBRC 100140 / 7) (Sulfolobus tokodaii).